A 43-amino-acid polypeptide reads, in one-letter code: Defensin-B (43 aa).

Intrachain disulfides connect Cys-3/Cys-34, Cys-20/Cys-39, and Cys-24/Cys-41.

It is found in the secreted. In terms of biological role, antibacterial protein. Strong activity against the Gram-positive bacteria M.luteus, B.megaterium and S.aureus. Reduced activity against Gram-positive bacterium B.subtilis and weak activity against Gram-negative bacterium X.japonicus. No detectable activity against the Gram-negative bacteria E.asbriae, E.coli, P.aeruginosa and S.marcescens. This Anomala cuprea (Cupreous chafer beetle) protein is Defensin-B.